The chain runs to 505 residues: Protein disulfide-isomerase A3 (505 aa).

Positions 1 to 24 are cleaved as a signal peptide; it reads MRLRRLALFPGVALLLAAARLAAA. One can recognise a Thioredoxin 1 domain in the interval 25-133; it reads SDVLELTDDN…IVSHLKKQAG (109 aa). Active-site nucleophile residues include Cys-57 and Cys-60. The cysteines at positions 57 and 60 are disulfide-linked. Position 61 is an N6-methyllysine (Lys-61). Cysteines 85 and 92 form a disulfide. Lys-129 is modified (N6-succinyllysine). Lys-152 is subject to N6-acetyllysine. Lys-218 bears the N6-succinyllysine mark. N6-acetyllysine is present on Lys-252. Thr-319 bears the Phosphothreonine mark. The region spanning 343–485 is the Thioredoxin 2 domain; that stretch reads SRDGKALERF…FISYLQREAT (143 aa). Lys-362 carries the N6-acetyllysine modification. Residues Cys-406 and Cys-409 each act as nucleophile in the active site. Cys-406 and Cys-409 form a disulfide bridge. A disordered region spans residues 484 to 505; the sequence is ATNPPVIQEEKPKKKKKAQEDL. The span at 491-505 shows a compositional bias: basic and acidic residues; that stretch reads QEEKPKKKKKAQEDL. N6-acetyllysine is present on Lys-494. Positions 502–505 match the Prevents secretion from ER motif; sequence QEDL.

Part of the major histocompatibility complex class I (MHC I) peptide loading complex composed of TAP1, TAP2, B2M, MHC heavy chain, TAPBP, PDIA3, and CALR. Interacts with ERP27 and CANX. Interacts with SERPINA2 and with the S and Z variants of SERPINA1. Interacts with ATP2A2. Post-translationally, within the major histocompatibility complex class I (MHC I) peptide loading complex forms reversible disulfide-linked heterodimers with TAPBP as part of its protein folding chaperone activity. This is essential to assist the dynamic assembly of the MHC I complex with high affinity antigens in the endoplasmic reticulum. In terms of processing, phosphorylated. Detected in the flagellum and head region of spermatozoa (at protein level). Expressed in liver, stomach and colon (at protein level). Expressed in gastric parietal cells and chief cells (at protein level).

Its subcellular location is the endoplasmic reticulum. The protein localises to the endoplasmic reticulum lumen. It is found in the melanosome. The catalysed reaction is Catalyzes the rearrangement of -S-S- bonds in proteins.. Its activity is regulated as follows. Association with calcitriol does not affect its enzymatic activity. Its function is as follows. Protein disulfide isomerase that catalyzes the formation, isomerization, and reduction or oxidation of disulfide bonds in client proteins and functions as a protein folding chaperone. Core component of the major histocompatibility complex class I (MHC I) peptide loading complex where it functions as an essential folding chaperone for TAPBP. Through TAPBP, assists the dynamic assembly of the MHC I complex with high affinity antigens in the endoplasmic reticulum. Therefore, plays a crucial role in the presentation of antigens to cytotoxic T cells in adaptive immunity. This chain is Protein disulfide-isomerase A3, found in Homo sapiens (Human).